The following is a 220-amino-acid chain: 7-cyano-7-deazaguanine synthase (220 aa).

F10–L20 serves as a coordination point for ATP. The Zn(2+) site is built by C186, C195, C198, and C201.

Belongs to the QueC family. In terms of assembly, homodimer. It depends on Zn(2+) as a cofactor.

It catalyses the reaction 7-carboxy-7-deazaguanine + NH4(+) + ATP = 7-cyano-7-deazaguanine + ADP + phosphate + H2O + H(+). The protein operates within purine metabolism; 7-cyano-7-deazaguanine biosynthesis. In terms of biological role, catalyzes the ATP-dependent conversion of 7-carboxy-7-deazaguanine (CDG) to 7-cyano-7-deazaguanine (preQ(0)). The chain is 7-cyano-7-deazaguanine synthase from Bacillus thuringiensis (strain Al Hakam).